The sequence spans 909 residues: Protein NLP1 (909 aa).

Disordered regions lie at residues 51 to 71 (KSLK…DNSP), 536 to 556 (KEDP…PVPN), 568 to 605 (ASTP…RAKT), and 690 to 745 (NSPN…ENTG). The span at 55-70 (QTEQSPSASTAMNDNS) shows a compositional bias: polar residues. One can recognise an RWP-RK domain in the interval 595 to 676 (RRPGEKKRAK…MDSVQGAQGS (82 aa)). Polar residues predominate over residues 690-716 (NSPNMSSNGPSLKSNEQPSHLNAQTDN). Low complexity predominate over residues 725–745 (RSPSSSCSKSSGSSNNNENTG). In terms of domain architecture, PB1 spans 811 to 894 (AIKVKATFGE…HTIKISLNEA (84 aa)).

The protein resides in the nucleus. Its function is as follows. Probable transcription factor. This Arabidopsis thaliana (Mouse-ear cress) protein is Protein NLP1 (NLP1).